A 461-amino-acid polypeptide reads, in one-letter code: ATP synthase subunit beta (461 aa).

149-156 (GGAGVGKT) provides a ligand contact to ATP.

This sequence belongs to the ATPase alpha/beta chains family. In terms of assembly, F-type ATPases have 2 components, CF(1) - the catalytic core - and CF(0) - the membrane proton channel. CF(1) has five subunits: alpha(3), beta(3), gamma(1), delta(1), epsilon(1). CF(0) has three main subunits: a(1), b(2) and c(9-12). The alpha and beta chains form an alternating ring which encloses part of the gamma chain. CF(1) is attached to CF(0) by a central stalk formed by the gamma and epsilon chains, while a peripheral stalk is formed by the delta and b chains.

The protein resides in the cell membrane. It carries out the reaction ATP + H2O + 4 H(+)(in) = ADP + phosphate + 5 H(+)(out). Produces ATP from ADP in the presence of a proton gradient across the membrane. The catalytic sites are hosted primarily by the beta subunits. The protein is ATP synthase subunit beta of Caldanaerobacter subterraneus subsp. tengcongensis (strain DSM 15242 / JCM 11007 / NBRC 100824 / MB4) (Thermoanaerobacter tengcongensis).